Here is a 211-residue protein sequence, read N- to C-terminus: Protein-L-isoaspartate O-methyltransferase (211 aa).

The active site involves S62.

It belongs to the methyltransferase superfamily. L-isoaspartyl/D-aspartyl protein methyltransferase family.

It localises to the cytoplasm. The enzyme catalyses [protein]-L-isoaspartate + S-adenosyl-L-methionine = [protein]-L-isoaspartate alpha-methyl ester + S-adenosyl-L-homocysteine. Catalyzes the methyl esterification of L-isoaspartyl residues in peptides and proteins that result from spontaneous decomposition of normal L-aspartyl and L-asparaginyl residues. It plays a role in the repair and/or degradation of damaged proteins. This is Protein-L-isoaspartate O-methyltransferase from Shewanella frigidimarina (strain NCIMB 400).